The chain runs to 156 residues: Small ribosomal subunit protein uS7 (156 aa).

In terms of assembly, part of the 30S ribosomal subunit. Contacts proteins S9 and S11.

One of the primary rRNA binding proteins, it binds directly to 16S rRNA where it nucleates assembly of the head domain of the 30S subunit. Is located at the subunit interface close to the decoding center, probably blocks exit of the E-site tRNA. The chain is Small ribosomal subunit protein uS7 from Rhodopseudomonas palustris (strain ATCC BAA-98 / CGA009).